A 427-amino-acid polypeptide reads, in one-letter code: Arginine biosynthesis bifunctional protein ArgJ (427 aa).

Residues T174, K200, T211, E291, N422, and T427 each coordinate substrate. T211 (nucleophile) is an active-site residue.

It belongs to the ArgJ family. In terms of assembly, heterotetramer of two alpha and two beta chains.

The protein resides in the cytoplasm. It carries out the reaction N(2)-acetyl-L-ornithine + L-glutamate = N-acetyl-L-glutamate + L-ornithine. The enzyme catalyses L-glutamate + acetyl-CoA = N-acetyl-L-glutamate + CoA + H(+). It participates in amino-acid biosynthesis; L-arginine biosynthesis; L-ornithine and N-acetyl-L-glutamate from L-glutamate and N(2)-acetyl-L-ornithine (cyclic): step 1/1. Its pathway is amino-acid biosynthesis; L-arginine biosynthesis; N(2)-acetyl-L-ornithine from L-glutamate: step 1/4. Its function is as follows. Catalyzes two activities which are involved in the cyclic version of arginine biosynthesis: the synthesis of N-acetylglutamate from glutamate and acetyl-CoA as the acetyl donor, and of ornithine by transacetylation between N(2)-acetylornithine and glutamate. This chain is Arginine biosynthesis bifunctional protein ArgJ, found in Prochlorococcus marinus (strain MIT 9313).